A 518-amino-acid polypeptide reads, in one-letter code: MVAYHLLTLISLGLGSHCASALQYGYNQLSTHKDSAVVAGAFPAINGTHLQSPAFTSPGTVPRGFSDGTSGPTRDETMEGFMRRLARSNSWMAYHEADFKSEEGRKFPYMYLSASNSSVENPSSRKLRVWLQGGVHGNEPAGDQSMLALLGDLAANQKWAAKLLEKMDILVLPRYNPDGVFYFQRYLATNFDPNRDHIKLARQQTRDIKELFARFSPHIATDMHEFTAGRTFGPKRDIIYAADALFSAAKNLNIDEGIRQLSEELFAKRMGKDIEAAGLRWDPYITLGESSSSKLLLLEAGTDAKIGRNAMGLSQCVVFLCETRGIGIAGQHFERRTLSGLVMAKSILQTAVDNFDEVYNTIERGIRRFTNSRNDIVLSDKSPVMERTFGMLNITDASLFDYPIDFATTTPAEAVLTRSRPRAYLIPPSWPDIVKRLEVFGVKADKLPYSYVGPVEALNVTSVTFDKEYYEGVVTTTVETKLVERNIRLPAGSYLVKTNQKNAALAFVSLEVRTLYPF.

Residues 1–21 (MVAYHLLTLISLGLGSHCASA) form the signal peptide. N-linked (GlcNAc...) asparagine glycosylation is present at Asn-46. The tract at residues 53 to 76 (PAFTSPGTVPRGFSDGTSGPTRDE) is disordered. The Peptidase M14 domain occupies 71–351 (GPTRDETMEG…VMAKSILQTA (281 aa)). An N-linked (GlcNAc...) asparagine glycan is attached at Asn-116. Residues His-136, Glu-139, and His-224 each contribute to the Zn(2+) site. The Proton donor/acceptor role is filled by Glu-322. 2 N-linked (GlcNAc...) asparagine glycosylation sites follow: Asn-393 and Asn-459.

Belongs to the peptidase M14 family. Zn(2+) is required as a cofactor.

The protein resides in the secreted. Functionally, extracellular metalloprotease that contributes to pathogenicity. In Trichophyton verrucosum (strain HKI 0517), this protein is Probable carboxypeptidase 2 (MCPB).